Here is a 217-residue protein sequence, read N- to C-terminus: Ribonuclease HII 2 (217 aa).

One can recognise an RNase H type-2 domain in the interval 28–217; the sequence is GLLAGVDEAG…VREVLLERRP (190 aa). Asp34, Glu35, and Asp126 together coordinate a divalent metal cation.

This sequence belongs to the RNase HII family. Mn(2+) is required as a cofactor. Requires Mg(2+) as cofactor.

It is found in the cytoplasm. It catalyses the reaction Endonucleolytic cleavage to 5'-phosphomonoester.. Its function is as follows. Endonuclease that specifically degrades the RNA of RNA-DNA hybrids. The sequence is that of Ribonuclease HII 2 from Methylibium petroleiphilum (strain ATCC BAA-1232 / LMG 22953 / PM1).